Here is a 215-residue protein sequence, read N- to C-terminus: Probable phosphoglycerate mutase GpmB (215 aa).

Substrate-binding positions include R8 to N15, Q21 to G22, R58, R60, E82 to M85, R104 to R105, and G151 to I152. H9 acts as the Tele-phosphohistidine intermediate in catalysis. Residue E82 is the Proton donor/acceptor of the active site.

Belongs to the phosphoglycerate mutase family. GpmB subfamily.

The enzyme catalyses (2R)-2-phosphoglycerate = (2R)-3-phosphoglycerate. The protein operates within carbohydrate degradation; glycolysis; pyruvate from D-glyceraldehyde 3-phosphate: step 3/5. The chain is Probable phosphoglycerate mutase GpmB from Citrobacter koseri (strain ATCC BAA-895 / CDC 4225-83 / SGSC4696).